Consider the following 177-residue polypeptide: Large ribosomal subunit protein uL16 (177 aa).

Belongs to the universal ribosomal protein uL16 family. As to quaternary structure, part of the 50S ribosomal subunit. Weakly binds 5S rRNA. Probably binds the A and P site tRNAs.

Functionally, this is 1 of 5 proteins that mediate the attachment of the 5S rRNA onto the large ribosomal subunit, stabilizing the orientation of adjacent RNA domains. Modeling places the A and P site tRNAs in close proximity to this protein. This is Large ribosomal subunit protein uL16 from Haloarcula marismortui (strain ATCC 43049 / DSM 3752 / JCM 8966 / VKM B-1809) (Halobacterium marismortui).